The sequence spans 870 residues: Ubiquitin-protein ligase E3A (870 aa).

Position 8 is a phosphoserine (S8). A C4-type; atypical zinc finger spans residues 42-81 (CGNEACTNEFCASCPTFLRMDNNAAAIKALELYKINAKLC). Positions 171-180 (EELKSLQEKD) are enriched in basic and acidic residues. The interval 171–223 (EELKSLQEKDEDKDEDEKEKAACSAAAMEEDSEASSSRMGDSSQGDNNVQKLG) is disordered. A compositionally biased stretch (polar residues) spans 208–220 (RMGDSSQGDNNVQ). Position 213 is a phosphoserine (S213). Residues 542 to 870 (NPADLKKQLY…ITYAKGFGML (329 aa)) form the HECT domain. Position 654 is a phosphotyrosine; by ABL1 (Y654). C838 (glycyl thioester intermediate) is an active-site residue.

As to quaternary structure, the active form is probably a homotrimer. Binds UBQLN1 and UBQLN2. Interacts with the 26S proteasome. Interacts with BPY2. Interacts with HIF1AN, MAPK6 and NEURL4; interaction with MAPK6 may be mediated by NEURL4. Interacts with the proteasomal subunit PSMD4. Interacts with BMAL1. Interacts with ARC. Interacts with ESR1 and WBP2. Phosphorylation at Tyr-654 by ABL1 impairs E3 ligase activity. In terms of tissue distribution, widely expressed. Most abundant in brain, heart and thymus.

It localises to the cytoplasm. It is found in the nucleus. It catalyses the reaction S-ubiquitinyl-[E2 ubiquitin-conjugating enzyme]-L-cysteine + [acceptor protein]-L-lysine = [E2 ubiquitin-conjugating enzyme]-L-cysteine + N(6)-ubiquitinyl-[acceptor protein]-L-lysine.. The protein operates within protein modification; protein ubiquitination. Functionally, E3 ubiquitin-protein ligase which accepts ubiquitin from an E2 ubiquitin-conjugating enzyme in the form of a thioester and transfers it to its substrates. Several substrates have been identified including the BMAL1, ARC, LAMTOR1, RAD23A and RAD23B, MCM7 (which is involved in DNA replication), annexin A1, the PML tumor suppressor, and the cell cycle regulator CDKN1B. Additionally, may function as a cellular quality control ubiquitin ligase by helping the degradation of the cytoplasmic misfolded proteins. Finally, UBE3A also promotes its own degradation in vivo. Plays an important role in the regulation of the circadian clock: involved in the ubiquitination of the core clock component BMAL1, leading to its proteasomal degradation. Acts as a regulator of synaptic development by mediating ubiquitination and degradation of ARC. Required for synaptic remodeling in neurons by mediating ubiquitination and degradation of LAMTOR1, thereby limiting mTORC1 signaling and activity-dependent synaptic remodeling. Synergizes with WBP2 in enhancing PGR activity. This chain is Ubiquitin-protein ligase E3A, found in Mus musculus (Mouse).